Consider the following 197-residue polypeptide: Imidazoleglycerol-phosphate dehydratase (197 aa).

The protein belongs to the imidazoleglycerol-phosphate dehydratase family.

Its subcellular location is the cytoplasm. It carries out the reaction D-erythro-1-(imidazol-4-yl)glycerol 3-phosphate = 3-(imidazol-4-yl)-2-oxopropyl phosphate + H2O. It functions in the pathway amino-acid biosynthesis; L-histidine biosynthesis; L-histidine from 5-phospho-alpha-D-ribose 1-diphosphate: step 6/9. The sequence is that of Imidazoleglycerol-phosphate dehydratase from Saccharophagus degradans (strain 2-40 / ATCC 43961 / DSM 17024).